The primary structure comprises 305 residues: UDP-3-O-acyl-N-acetylglucosamine deacetylase (305 aa).

The Zn(2+) site is built by H79, H238, and D242. Residue H265 is the Proton donor of the active site.

It belongs to the LpxC family. Zn(2+) is required as a cofactor.

The catalysed reaction is a UDP-3-O-[(3R)-3-hydroxyacyl]-N-acetyl-alpha-D-glucosamine + H2O = a UDP-3-O-[(3R)-3-hydroxyacyl]-alpha-D-glucosamine + acetate. It participates in glycolipid biosynthesis; lipid IV(A) biosynthesis; lipid IV(A) from (3R)-3-hydroxytetradecanoyl-[acyl-carrier-protein] and UDP-N-acetyl-alpha-D-glucosamine: step 2/6. In terms of biological role, catalyzes the hydrolysis of UDP-3-O-myristoyl-N-acetylglucosamine to form UDP-3-O-myristoylglucosamine and acetate, the committed step in lipid A biosynthesis. The polypeptide is UDP-3-O-acyl-N-acetylglucosamine deacetylase (Pectobacterium atrosepticum (strain SCRI 1043 / ATCC BAA-672) (Erwinia carotovora subsp. atroseptica)).